Consider the following 266-residue polypeptide: Methyl-coenzyme M reductase II subunit gamma (266 aa).

R123 is a binding site for coenzyme M.

The protein belongs to the methyl-coenzyme M reductase gamma subunit family. As to quaternary structure, MCR is a hexamer of two alpha, two beta, and two gamma chains, forming a dimer of heterotrimers. Coenzyme F430 serves as cofactor.

It carries out the reaction coenzyme B + methyl-coenzyme M = methane + coenzyme M-coenzyme B heterodisulfide. It participates in one-carbon metabolism; methyl-coenzyme M reduction; methane from methyl-coenzyme M: step 1/1. Functionally, component of the methyl-coenzyme M reductase (MCR) I that catalyzes the reductive cleavage of methyl-coenzyme M (CoM-S-CH3 or 2-(methylthio)ethanesulfonate) using coenzyme B (CoB or 7-mercaptoheptanoylthreonine phosphate) as reductant which results in the production of methane and the mixed heterodisulfide of CoB and CoM (CoM-S-S-CoB). This is the final step in methanogenesis. The chain is Methyl-coenzyme M reductase II subunit gamma (mrtG) from Methanocaldococcus jannaschii (strain ATCC 43067 / DSM 2661 / JAL-1 / JCM 10045 / NBRC 100440) (Methanococcus jannaschii).